The chain runs to 451 residues: Lysine histidine transporter-like 3 (451 aa).

At 1–40 the chain is on the cytoplasmic side; it reads MKGIPSSSNQILNQDLVEDQSFELEDWLPITASRNANWYY. A helical transmembrane segment spans residues 41-61; sequence SAFHNVTAIVGAGVLGLPYAM. Residues 62–63 are Extracellular-facing; that stretch reads SE. Residues 64 to 84 form a helical membrane-spanning segment; that stretch reads LGWGPGVVVLILSWVITLYTF. The Cytoplasmic portion of the chain corresponds to 85–115; it reads WQMIEMHEMFEGKRFDRYHELGQAAFGKKLG. A helical membrane pass occupies residues 116-136; it reads LYIVVPLQLLVETSACIVYMV. The Extracellular portion of the chain corresponds to 137 to 159; the sequence is TGGESLKKIHQLSVGDYECRKLK. A helical transmembrane segment spans residues 160–177; that stretch reads VRHFILIFASSQFVLSLL. Residues 178-182 lie on the Cytoplasmic side of the membrane; it reads KNFNS. A helical membrane pass occupies residues 183–203; that stretch reads ISGVSLVAAVMSMSYSTIAWV. The Extracellular segment spans residues 204 to 227; sequence ASLTKGVANNVEYGYKRRNNTSVP. The helical transmembrane segment at 228-248 threads the bilayer; it reads LAFLGALGEMAFAYAGHNVVL. Residues 249 to 269 are Cytoplasmic-facing; it reads EIQATIPSTPENPSKRPMWKG. Residues 270-290 form a helical membrane-spanning segment; the sequence is AIVAYIIVAFCYFPVALVGFW. Topologically, residues 291-309 are extracellular; it reads TFGNNVEENILKTLRGPKG. The chain crosses the membrane as a helical span at residues 310 to 330; it reads LIIVANIFVIIHLMGSYQVYA. Residues 331 to 358 are Cytoplasmic-facing; sequence MPVFDMIESVMIKKWHFSPTRVLRFTIR. The chain crosses the membrane as a helical span at residues 359–379; it reads WTFVAATMGIAVALPHFSALL. Position 380 (S380) is a topological domain, extracellular. The helical transmembrane segment at 381 to 401 threads the bilayer; it reads FFGGFIFAPTTYFIPCIIWLI. At 402–413 the chain is on the cytoplasmic side; it reads LKKPKRFSLSWC. Residues 414-434 traverse the membrane as a helical segment; the sequence is INWICIILGVLVMIIAPIGGL. Residues 435–451 are Extracellular-facing; the sequence is AKLMNALKQPDSSCKST.

This sequence belongs to the amino acid/polyamine transporter 2 family. Amino acid/auxin permease (AAAP) (TC 2.A.18.2) subfamily.

Its subcellular location is the cell membrane. Amino acid transporter. This is Lysine histidine transporter-like 3 from Arabidopsis thaliana (Mouse-ear cress).